The primary structure comprises 297 residues: MPVDKNLRDLEPGIHTDLEGRLTYGGYLRLDQLLSAQQPLSEPAHHDEMLFIIQHQTSELWLKLLAHELRAAIVHLQHDEVWQCRKVLARSKQVLRQLTEQWSVLETLTPSEYMGFRDVLGPSSGFQSLQYRYIEFLLGNKNPQVLQVFAYDPQGRARLREVLEAPSLYEEFLRYLARFGHAIPQQYHARDWTVAHVADDTLRPVFERIYENTDRYWREYALCEDLVDVETQFQLWRFRHMRTVMRVIGFKRGTGGSSGVGFLQQALALTFFPELFDVRTSVGVDSRPPQGAADTQG.

Residues 51-55, Y113, and R117 contribute to the substrate site; that span reads FIIQH. H240 contributes to the heme binding site. T254 contacts substrate.

Belongs to the tryptophan 2,3-dioxygenase family. Homotetramer. The cofactor is heme.

It carries out the reaction L-tryptophan + O2 = N-formyl-L-kynurenine. It participates in amino-acid degradation; L-tryptophan degradation via kynurenine pathway; L-kynurenine from L-tryptophan: step 1/2. Functionally, heme-dependent dioxygenase that catalyzes the oxidative cleavage of the L-tryptophan (L-Trp) pyrrole ring and converts L-tryptophan to N-formyl-L-kynurenine. Catalyzes the oxidative cleavage of the indole moiety. The polypeptide is Tryptophan 2,3-dioxygenase (Xanthomonas oryzae pv. oryzae (strain MAFF 311018)).